Here is a 278-residue protein sequence, read N- to C-terminus: MTIRIPSGEEADYTLHLPRILCLHGGGTNARIFRMQCRVLERFLRSTFRFVYAEAPFAAQPGSDVTSVYKDHGPFKAWLRCTAADPDRSAQEVVKKINLSIATAMYDDDMRGATGEWIALLGFSQGAKVAASILYAQQTIQQRLGERAATRPRFRFAVLMAGRGPLVWLLPETSSGPGSIPMGLVDAASPSMLDSEPELPTDSTEHMLRLPTLHVHGLRDPGLSLHRRLLRSYCQSDSVSLVEWEGEHRVPLKTKDVTAVVDQIYALARDTGVLDSWC.

Active-site charge relay system residues include serine 124, aspartate 220, and histidine 248.

The protein belongs to the LovG family.

The protein operates within secondary metabolite biosynthesis. In terms of biological role, esterase; part of the gene cluster that mediates the biosynthesis of the antibiotic 2,4-dihydroxy-3-methyl-6-(2-oxopropyl)benzaldehyde (DHMBA) and its derivatives. The direct non-reducing polyketide synthase dbaI product is 2,4-dihydroxy-3-methyl-6-(2-oxopropyl)benzaldehyde (DHMBA), produced by condensation of one acetyl-CoA starter unit with 4 malonyl-CoA units and one methylation step. The FAD-dependent monooxygenase dbaH is responsible for the synthesis of yellow pigments derived from the oxidation of DHMBA. The roles of dbaB, C, E and F have still to be determined. This is Esterase dbaE from Emericella nidulans (strain FGSC A4 / ATCC 38163 / CBS 112.46 / NRRL 194 / M139) (Aspergillus nidulans).